The following is a 493-amino-acid chain: ATP synthase subunit beta, chloroplastic (493 aa).

Residue 170 to 177 coordinates ATP; that stretch reads GGAGVGKT.

Belongs to the ATPase alpha/beta chains family. F-type ATPases have 2 components, CF(1) - the catalytic core - and CF(0) - the membrane proton channel. CF(1) has five subunits: alpha(3), beta(3), gamma(1), delta(1), epsilon(1). CF(0) has four main subunits: a(1), b(1), b'(1) and c(9-12).

It localises to the plastid. It is found in the chloroplast thylakoid membrane. The enzyme catalyses ATP + H2O + 4 H(+)(in) = ADP + phosphate + 5 H(+)(out). Functionally, produces ATP from ADP in the presence of a proton gradient across the membrane. The catalytic sites are hosted primarily by the beta subunits. The sequence is that of ATP synthase subunit beta, chloroplastic from Staurastrum punctulatum (Green alga).